A 300-amino-acid chain; its full sequence is 17-beta-hydroxysteroid dehydrogenase 13 (300 aa).

A signal peptide spans 1-19 (MNLILELLLLVGIIIYSYL). Residue Ser-33 is modified to Phosphoserine. 40 to 67 (LITGAGHGIGRLTAYEFAKQKSRLVLWD) provides a ligand contact to NAD(+). Ser-69 is subject to Phosphoserine. The residue at position 79 (Lys-79) is an N6-acetyllysine. Ser-172 serves as a coordination point for substrate. Tyr-185 acts as the Proton acceptor in catalysis. Lys-189 lines the NAD(+) pocket.

The protein belongs to the short-chain dehydrogenases/reductases (SDR) family.

It localises to the lipid droplet. It is found in the endoplasmic reticulum. The enzyme catalyses 17beta-estradiol + NAD(+) = estrone + NADH + H(+). It catalyses the reaction all-trans-retinol + NAD(+) = all-trans-retinal + NADH + H(+). It carries out the reaction all-trans-retinal + NAD(+) + H2O = all-trans-retinoate + NADH + 2 H(+). Plays a pivotal role in hepatic lipid metabolism. In vitro, it catalyzes the oxidation of a variety of lipid substrates, including 17beta-estradiol, retinol, retinal, and leukotriene B4. This is 17-beta-hydroxysteroid dehydrogenase 13 (Hsd17b13) from Rattus norvegicus (Rat).